The chain runs to 433 residues: GTPase Der (433 aa).

EngA-type G domains are found at residues asparagine 3–isoleucine 167 and proline 174–threonine 349. Residues glycine 9–serine 16, aspartate 56–tyrosine 60, asparagine 119–aspartate 122, glycine 180–serine 187, aspartate 227–isoleucine 231, and asparagine 292–aspartate 295 contribute to the GTP site. Positions glutamine 350–lysine 433 constitute a KH-like domain.

This sequence belongs to the TRAFAC class TrmE-Era-EngA-EngB-Septin-like GTPase superfamily. EngA (Der) GTPase family. As to quaternary structure, associates with the 50S ribosomal subunit.

Functionally, GTPase that plays an essential role in the late steps of ribosome biogenesis. The protein is GTPase Der of Amoebophilus asiaticus (strain 5a2).